Reading from the N-terminus, the 193-residue chain is Holliday junction branch migration complex subunit RuvA (193 aa).

The segment at 1-64 (MIGRIAGTLI…EDAHLLYGFG (64 aa)) is domain I. The interval 65 to 143 (TAAERETFRQ…ADLGTVPGGP (79 aa)) is domain II. The segment at 144–151 (AVSDDAVD) is flexible linker. Positions 151-193 (DVLNALLALGYSDKEAAQAIKQVPAGTGVSEGIKLALKALSKG) are domain III.

This sequence belongs to the RuvA family. Homotetramer. Forms an RuvA(8)-RuvB(12)-Holliday junction (HJ) complex. HJ DNA is sandwiched between 2 RuvA tetramers; dsDNA enters through RuvA and exits via RuvB. An RuvB hexamer assembles on each DNA strand where it exits the tetramer. Each RuvB hexamer is contacted by two RuvA subunits (via domain III) on 2 adjacent RuvB subunits; this complex drives branch migration. In the full resolvosome a probable DNA-RuvA(4)-RuvB(12)-RuvC(2) complex forms which resolves the HJ.

Its subcellular location is the cytoplasm. Its function is as follows. The RuvA-RuvB-RuvC complex processes Holliday junction (HJ) DNA during genetic recombination and DNA repair, while the RuvA-RuvB complex plays an important role in the rescue of blocked DNA replication forks via replication fork reversal (RFR). RuvA specifically binds to HJ cruciform DNA, conferring on it an open structure. The RuvB hexamer acts as an ATP-dependent pump, pulling dsDNA into and through the RuvAB complex. HJ branch migration allows RuvC to scan DNA until it finds its consensus sequence, where it cleaves and resolves the cruciform DNA. This is Holliday junction branch migration complex subunit RuvA from Ralstonia nicotianae (strain ATCC BAA-1114 / GMI1000) (Ralstonia solanacearum).